The following is a 179-amino-acid chain: Large ribosomal subunit protein uL5 (179 aa).

It belongs to the universal ribosomal protein uL5 family. As to quaternary structure, part of the 50S ribosomal subunit; part of the 5S rRNA/L5/L18/L25 subcomplex. Contacts the 5S rRNA and the P site tRNA. Forms a bridge to the 30S subunit in the 70S ribosome.

In terms of biological role, this is one of the proteins that bind and probably mediate the attachment of the 5S RNA into the large ribosomal subunit, where it forms part of the central protuberance. In the 70S ribosome it contacts protein S13 of the 30S subunit (bridge B1b), connecting the 2 subunits; this bridge is implicated in subunit movement. Contacts the P site tRNA; the 5S rRNA and some of its associated proteins might help stabilize positioning of ribosome-bound tRNAs. The chain is Large ribosomal subunit protein uL5 from Lachnoclostridium phytofermentans (strain ATCC 700394 / DSM 18823 / ISDg) (Clostridium phytofermentans).